We begin with the raw amino-acid sequence, 192 residues long: Superoxide dismutase [Fe] (192 aa).

Fe cation is bound by residues His26, His73, Asp157, and His161.

It belongs to the iron/manganese superoxide dismutase family. Homodimer. The cofactor is Fe cation.

The catalysed reaction is 2 superoxide + 2 H(+) = H2O2 + O2. In terms of biological role, destroys superoxide anion radicals which are normally produced within the cells and which are toxic to biological systems. This is Superoxide dismutase [Fe] from Pseudoalteromonas translucida (strain TAC 125).